The following is a 600-amino-acid chain: NADH-quinone oxidoreductase subunit C/D (600 aa).

The NADH dehydrogenase I subunit C stretch occupies residues 1-190 (MIDLMPKKNT…EPFFLNEQKE (190 aa)). The tract at residues 214–600 (EFMFLNLGPN…IDFVMSDVDR (387 aa)) is NADH dehydrogenase I subunit D.

It in the N-terminal section; belongs to the complex I 30 kDa subunit family. The protein in the C-terminal section; belongs to the complex I 49 kDa subunit family. As to quaternary structure, NDH-1 is composed of 13 different subunits. Subunits NuoB, CD, E, F, and G constitute the peripheral sector of the complex.

The protein localises to the cell membrane. It catalyses the reaction a quinone + NADH + 5 H(+)(in) = a quinol + NAD(+) + 4 H(+)(out). NDH-1 shuttles electrons from NADH, via FMN and iron-sulfur (Fe-S) centers, to quinones in the respiratory chain. The immediate electron acceptor for the enzyme in this species is believed to be ubiquinone. Couples the redox reaction to proton translocation (for every two electrons transferred, four hydrogen ions are translocated across the cytoplasmic membrane), and thus conserves the redox energy in a proton gradient. This is NADH-quinone oxidoreductase subunit C/D from Buchnera aphidicola subsp. Acyrthosiphon pisum (strain 5A).